We begin with the raw amino-acid sequence, 411 residues long: LIM domain-binding protein 1 (411 aa).

Ser-2 bears the N-acetylserine mark. A Phosphothreonine modification is found at Thr-61. Phosphoserine occurs at positions 265 and 302. Disordered stretches follow at residues Ala-283–Leu-330 and Asp-367–Gln-411. Positions Ser-302–Asn-318 are enriched in low complexity. Residues Asp-336 to Glu-375 form the LIM interaction domain (LID) domain.

This sequence belongs to the LDB family. Interacts with ESR1. Forms homodimers and heterodimers. Interacts with and activates LHX1/LIM1. Interacts with the LIM domains of ISL1 and LMO2. Can assemble in a complex with LMO2 and TAL1/SCL but does not interact with TAL1/SCL directly. Strongly interacts with the LIM2 domain of LMX1A and more weakly with the LIM1 domain. Homodimerization is not required for, and does not effect, LMX1A-binding. Component of a nuclear TAL-1 complex composed at least of CBFA2T3, LDB1, TAL1 and TCF3. Interacts with LHX6 and LHX9. At neuronal promoters, forms a complex with LHX3 involved in the specification of interneurons, in motor neurons, it is displaced by ISL1 to form a ternary complex in which ISL1 contacts both LHX3 and LDB1. Interacts with SLK; leading to negatively regulate SLK kinase activity. Interacts with YWHAZ. Interacts with PRDM1/BLIMP1. Interacts with LMO4. Interacts with RLIM/RNF12; the interaction inhibits the ubiquitination of LMO proteins. Ubiquitinated by RLIM/RNF12, leading to its degradation by the proteasome. In terms of tissue distribution, expressed in a wide range of adult tissues including brain, heart, skeletal muscle, colon, thymus, spleen, kidney, liver, small intestine, lung and peripheral blood leukocytes.

The protein resides in the nucleus. Binds to the LIM domain of a wide variety of LIM domain-containing transcription factors. May regulate the transcriptional activity of LIM-containing proteins by determining specific partner interactions. Plays a role in the development of interneurons and motor neurons in cooperation with LHX3 and ISL1. Acts synergistically with LHX1/LIM1 in axis formation and activation of gene expression. Acts with LMO2 in the regulation of red blood cell development, maintaining erythroid precursors in an immature state. This is LIM domain-binding protein 1 (LDB1) from Homo sapiens (Human).